The sequence spans 1504 residues: NAC-alpha domain-containing protein 1 (1504 aa).

10 disordered regions span residues lysine 127–tryptophan 150, aspartate 208–histidine 261, proline 315–serine 356, leucine 396–alanine 436, aspartate 460–glutamine 525, glycine 539–valine 565, valine 701–valine 812, aspartate 834–alanine 1064, proline 1099–lysine 1366, and proline 1430–proline 1467. Residues serine 342–serine 354 are compositionally biased toward low complexity. A compositionally biased stretch (acidic residues) spans glutamine 398 to valine 407. 2 stretches are compositionally biased toward low complexity: residues alanine 408–aspartate 422 and serine 462–glycine 475. A compositionally biased stretch (polar residues) spans serine 510 to glutamine 525. Polar residues predominate over residues proline 775–threonine 792. Over residues proline 930–asparagine 939 the composition is skewed to low complexity. Positions serine 958–threonine 968 are enriched in polar residues. Basic and acidic residues predominate over residues glutamate 989–arginine 1005. Serine 998 bears the Phosphoserine mark. Residues serine 1016–alanine 1031 are compositionally biased toward polar residues. The span at proline 1159–glutamine 1171 shows a compositional bias: pro residues. The segment covering valine 1213–asparagine 1222 has biased composition (polar residues). Phosphoserine is present on serine 1268. The NAC-A/B domain maps to serine 1354–valine 1419. A compositionally biased stretch (acidic residues) spans glutamate 1451–glycine 1464.

This sequence belongs to the NAC-alpha family.

Its subcellular location is the cytoplasm. The protein resides in the nucleus. Its function is as follows. May prevent inappropriate targeting of non-secretory polypeptides to the endoplasmic reticulum (ER). May bind to nascent polypeptide chains as they emerge from the ribosome and block their interaction with the signal recognition particle (SRP), which normally targets nascent secretory peptides to the ER. May also reduce the inherent affinity of ribosomes for protein translocation sites in the ER membrane (M sites). The chain is NAC-alpha domain-containing protein 1 (Nacad) from Mus musculus (Mouse).